We begin with the raw amino-acid sequence, 957 residues long: ADAMTS-like protein 2 (957 aa).

The signal sequence occupies residues 1–29 (MDGRRQHPHWAWSLLAVAVVAGGAAPTEA). Positions 47–106 (AYWWGEWTKWTACSRSCGGGVTSQERHCLQQRRKSVPGTGNRTCVGTSKRYQLCRVQECP) constitute a TSP type-1 1 domain. Intrachain disulfides connect C59/C100, C63/C105, and C74/C90. 8 N-linked (GlcNAc...) asparagine glycosylation sites follow: N87, N374, N435, N482, N518, N530, N539, and N550. The segment covering 532–544 (SSEAPFPNTSASP) has biased composition (polar residues). Positions 532 to 568 (SSEAPFPNTSASPPNLAGNRTHKARTRPKARKQGVSP) are disordered. A compositionally biased stretch (basic residues) spans 551-563 (RTHKARTRPKARK). TSP type-1 domains lie at 570–624 (DMYR…EFCA), 628–692 (CQPR…PACG), 694–742 (QWEM…TGPP), 743–801 (CDRQ…KNCP), 803–857 (HWLA…TCFE), and 859–914 (PCFK…QPCP). N-linked (GlcNAc...) asparagine glycosylation is present at N737. N-linked (GlcNAc...) asparagine glycosylation occurs at N813. Residues 918–956 (PDDSCQDQPGTNCALAIKVNLCGHWYYSKACCRSCRPPH) enclose the PLAC domain.

As to quaternary structure, interacts with LTBP1. Post-translationally, glycosylated. Can be O-fucosylated by POFUT2 on a serine or a threonine residue found within the consensus sequence C1-X(2)-(S/T)-C2-G of the TSP type-1 repeat domains where C1 and C2 are the first and second cysteine residue of the repeat, respectively. Fucosylated repeats can then be further glycosylated by the addition of a beta-1,3-glucose residue by the glucosyltransferase, B3GALTL. Fucosylation mediates the efficient secretion of ADAMTS family members. Can also be C-glycosylated with one or two mannose molecules on tryptophan residues within the consensus sequence W-X-X-W of the TPRs, and N-glycosylated. These other glycosylations can also facilitate secretion.

The protein resides in the secreted. The chain is ADAMTS-like protein 2 (Adamtsl2) from Mus musculus (Mouse).